The primary structure comprises 130 residues: Annexin A1 (130 aa).

An Isoglutamyl lysine isopeptide (Gln-Lys) (interchain with K-?) cross-link involves residue Gln19. The residue at position 24 (Ser24) is a Phosphoserine; by PKC. Annexin repeat units follow at residues 37–108 and 109–130; these read FDPS…ALLK and TPAQFDAEELRASMKGLGTDRR. Positions 54, 55, 57, 92, 95, 100, 122, 124, 126, 127, and 130 each coordinate Ca(2+).

Belongs to the annexin family.

The protein localises to the nucleus. Its subcellular location is the cytoplasm. The protein resides in the cell projection. It localises to the cilium. It is found in the basolateral cell membrane. The protein localises to the lateral cell membrane. Its subcellular location is the cell membrane. The protein resides in the apical cell membrane. It localises to the membrane. It is found in the early endosome. The protein localises to the cytoplasmic vesicle membrane. Its subcellular location is the endosome membrane. The protein resides in the secreted. It localises to the extracellular space. It is found in the extracellular exosome. The protein localises to the cytoplasmic vesicle. Its subcellular location is the secretory vesicle lumen. The protein resides in the phagocytic cup. Its function is as follows. Plays important roles in the innate immune response as effector of glucocorticoid-mediated responses and regulator of the inflammatory process. Has anti-inflammatory activity. Plays a role in glucocorticoid-mediated down-regulation of the early phase of the inflammatory response. Promotes resolution of inflammation and wound healing. Functions at least in part by activating the formyl peptide receptors and downstream signaling cascades. Promotes chemotaxis of granulocytes and monocytes via activation of the formyl peptide receptors. Contributes to the adaptive immune response by enhancing signaling cascades that are triggered by T-cell activation, regulates differentiation and proliferation of activated T-cells. Promotes the differentiation of T-cells into Th1 cells and negatively regulates differentiation into Th2 cells. Has no effect on unstimulated T-cells. Promotes rearrangement of the actin cytoskeleton, cell polarization and cell migration. Negatively regulates hormone exocytosis via activation of the formyl peptide receptors and reorganization of the actin cytoskeleton. Has high affinity for Ca(2+) and can bind up to eight Ca(2+) ions. Displays Ca(2+)-dependent binding to phospholipid membranes. Plays a role in the formation of phagocytic cups and phagosomes. Plays a role in phagocytosis by mediating the Ca(2+)-dependent interaction between phagosomes and the actin cytoskeleton. The protein is Annexin A1 (ANXA1) of Gallus gallus (Chicken).